Reading from the N-terminus, the 66-residue chain is Large ribosomal subunit protein uL29 (66 aa).

This sequence belongs to the universal ribosomal protein uL29 family.

The sequence is that of Large ribosomal subunit protein uL29 from Pseudothermotoga lettingae (strain ATCC BAA-301 / DSM 14385 / NBRC 107922 / TMO) (Thermotoga lettingae).